The chain runs to 89 residues: Large ribosomal subunit protein bL28 (89 aa).

Belongs to the bacterial ribosomal protein bL28 family.

The protein is Large ribosomal subunit protein bL28 of Chlamydia trachomatis serovar A (strain ATCC VR-571B / DSM 19440 / HAR-13).